The primary structure comprises 416 residues: Serine hydroxymethyltransferase (416 aa).

(6S)-5,6,7,8-tetrahydrofolate-binding positions include L121 and 125–127 (GHL). N6-(pyridoxal phosphate)lysine is present on K229.

This sequence belongs to the SHMT family. In terms of assembly, homodimer. Requires pyridoxal 5'-phosphate as cofactor.

The protein resides in the cytoplasm. It catalyses the reaction (6R)-5,10-methylene-5,6,7,8-tetrahydrofolate + glycine + H2O = (6S)-5,6,7,8-tetrahydrofolate + L-serine. Its pathway is one-carbon metabolism; tetrahydrofolate interconversion. The protein operates within amino-acid biosynthesis; glycine biosynthesis; glycine from L-serine: step 1/1. Catalyzes the reversible interconversion of serine and glycine with tetrahydrofolate (THF) serving as the one-carbon carrier. This reaction serves as the major source of one-carbon groups required for the biosynthesis of purines, thymidylate, methionine, and other important biomolecules. Also exhibits THF-independent aldolase activity toward beta-hydroxyamino acids, producing glycine and aldehydes, via a retro-aldol mechanism. The chain is Serine hydroxymethyltransferase from Aromatoleum aromaticum (strain DSM 19018 / LMG 30748 / EbN1) (Azoarcus sp. (strain EbN1)).